We begin with the raw amino-acid sequence, 1288 residues long: Peroxidasin homolog (1288 aa).

Positions 1–16 are cleaved as a signal peptide; that stretch reads MNLLLYLLLLVPWVLG. An LRRNT domain is found at 17 to 51; sequence SEDGCPAKCTCDKKGFTVDCSNAGLTRIPKGISSN. 7 LRR repeats span residues 27–49, 50–72, 73–96, 97–120, 122–143, 145–168, and 204–227; these read CDKK…KGIS, SNVR…DLEG, FPLL…ILDH, LPEL…ASES, PLAS…WLLQ, FPEL…LFEN, and AYCT…LLKC. The region spanning 180–228 is the LRRCT domain; sequence NPWNCDCRVTKVKALLRKVEWERKAYCTNPVELRHQAIDEVEESLLKCA. An N-linked (GlcNAc...) asparagine glycan is attached at asparagine 247. Positions 304 to 323 are disordered; that stretch reads LRQSHHSNGAPQFTYKPRDN. Ig-like C2-type domains follow at residues 314–400 and 407–494; these read PQFT…FSLD and PNIY…AKLT. Cysteine 335 and cysteine 384 are oxidised to a cystine. LRR repeat units lie at residues 356 to 381 and 387 to 412; these read SSRK…DSGR and VNSL…IYEG. A disulfide bond links cysteine 428 and cysteine 478. The N-linked (GlcNAc...) asparagine glycan is linked to asparagine 594. Cysteine 624 and cysteine 640 are disulfide-bonded. Residue aspartate 718 coordinates heme b. Histidine 719 (proton acceptor) is an active-site residue. A Ca(2+)-binding site is contributed by aspartate 720. Intrachain disulfides connect cysteine 739/cysteine 749 and cysteine 743/cysteine 770. A glycan (N-linked (GlcNAc...) asparagine) is linked at asparagine 740. Residues threonine 802, phenylalanine 804, aspartate 806, and serine 808 each coordinate Ca(2+). Residue asparagine 857 is glycosylated (N-linked (GlcNAc...) asparagine). 2 residues coordinate heme b: glutamate 876 and histidine 972. LRR repeat units follow at residues 998–1022 and 1049–1073; these read KAFF…LFAS and SLDL…EYRQ. 2 disulfide bridges follow: cysteine 1075–cysteine 1132 and cysteine 1173–cysteine 1200. The stretch at 1168-1189 is one LRR 12 repeat; the sequence is LARLLCDNGDEIDRIQKDVFMY.

This sequence belongs to the peroxidase family. XPO subfamily. It depends on Ca(2+) as a cofactor. Requires heme b as cofactor.

It localises to the secreted. The protein localises to the extracellular space. It is found in the extracellular matrix. The catalysed reaction is L-lysyl-[collagen] + L-methionyl-[collagen] + H2O2 = [collagen]-L-lysyl-N-S-L-methionyl-[collagen] + 2 H2O + H(+). It carries out the reaction bromide + H2O2 = hypobromite + H2O. It catalyses the reaction L-lysyl-[collagen] + L-methionyl-[collagen] + hypobromite = [collagen]-L-lysyl-N-S-L-methionyl-[collagen] + bromide + H2O + H(+). The enzyme catalyses L-tyrosyl-[protein] + bromide + H2O2 + H(+) = 3-bromo-L-tyrosyl-[protein] + 2 H2O. The catalysed reaction is hypobromite + L-tyrosyl-[protein] + H(+) = 3-bromo-L-tyrosyl-[protein] + H2O. Functionally, catalyzes the two-electron oxidation of bromide by hydrogen peroxide and generates hypobromite as a reactive intermediate which mediates the formation of sulfilimine cross-links between methionine and hydroxylysine residues within an uncross-linked collagen IV NC1 hexamer. Plays a role in the attachment of tissues and in axonal guidance during early developmental stages. May functionally antagonize the peroxidasin pxn-2 to maintain neuronal development. The chain is Peroxidasin homolog from Caenorhabditis briggsae.